Consider the following 963-residue polypeptide: Spliceosome associated factor 3, U4/U6 recycling protein (963 aa).

The segment covering 1 to 11 has biased composition (low complexity); that stretch reads MATAAETSASE. Disordered stretches follow at residues 1-36 and 50-90; these read MATA…RTRR and TMGP…YDEE. Ala2 is modified (N-acetylalanine). The interval 2-351 is mediates interaction with PRPF3; the sequence is ATAAETSASE…LVPDLWIRYS (350 aa). Phosphoserine occurs at positions 10 and 16. The segment covering 14–23 has biased composition (basic and acidic residues); that stretch reads AESKAGPKAD. Residues 21–46 adopt a coiled-coil conformation; sequence KADGEEDEVKAARTRRKVLSRAVAAA. Positions 57 to 69 are enriched in acidic residues; it reads QQEEGVSESDGDE. Residues 82–110 are a coiled coil; it reads EYEWEYDEEEEKNQLEIERLEEQLSINVY. HAT repeat units follow at residues 126 to 158, 164 to 195, 201 to 237, 242 to 275, 324 to 356, 359 to 391, 394 to 430, and 487 to 520; these read GELT…DEIS, LDRE…YSVG, GGLE…FESA, ARLE…WSED, GDPA…YLDR, KVKD…AMER, VDHQ…YLRR, and NNMQ…LERA. Residue Ser215 is modified to Phosphoserine. The tract at residues 487–520 is required for interaction with USP4; the sequence is NNMQKARELWDSIMTRGNAKYANMWLEYYNLERA. Positions 537–953 are necessary and sufficient for U6 snRNA binding; that stretch reads CTSDYPEHVC…AATEAPKMSN (417 aa). A coiled-coil region spans residues 559–619; it reads LEDWDIAVQK…ALKKKKKIRG (61 aa). Over residues 590-601 the composition is skewed to basic and acidic residues; it reads LVQQEEEKAEQR. The segment at 590-694 is disordered; sequence LVQQEEEKAE…AASLKRDMPK (105 aa). Residues 600–670 are required for nuclear localization; it reads QRKRARAEKK…EVAAGPAGKC (71 aa). Residues 601–608 carry the Nuclear localization signal motif; the sequence is RKRARAEK. The segment covering 602–617 has biased composition (basic residues); sequence KRARAEKKALKKKKKI. The segment covering 626-639 has biased composition (acidic residues); the sequence is DEDDEKEWGDDEEE. Residue Ser650 is modified to Phosphoserine. Position 657 is a phosphothreonine (Thr657). Positions 677-694 are enriched in basic and acidic residues; the sequence is PPSKQKEKAASLKRDMPK. Residues 704 to 782 enclose the RRM 1 domain; sequence ITVFVSNLPY…RPMFVSPCVD (79 aa). 3 positions are modified to phosphoserine: Ser769, Ser795, and Ser852. Residues 801–878 enclose the RRM 2 domain; the sequence is HKLFISGLPF…NIIKVAISNP (78 aa). The interval 878 to 898 is disordered; sequence PPQRKVPEKPETRKAPGGPML. Residues 882 to 891 show a composition bias toward basic and acidic residues; sequence KVPEKPETRK. An Omega-N-methylarginine modification is found at Arg906. Residues 920 to 948 form a disordered region; that stretch reads LQRPSAAAPQAENGPAAAPAVAAPAATEA. The segment covering 925–948 has biased composition (low complexity); the sequence is AAAPQAENGPAAAPAVAAPAATEA.

Component of the 7SK snRNP complex at least composed of P-TEFb (composed of CDK9 and CCNT1/cyclin-T1), HEXIM1, HEXIM2, BCDIN3, SART3 proteins and 7SK and U6 snRNAs. Interacts with AGO1 and AGO2. Interacts with PRPF3 and USP4; the interaction with PRPF3 is direct and recruits USP4 to its substrate PRPF3. Interacts with USP15; the interaction is direct. Interacts with HIV-1 Tat. Ubiquitously expressed.

It localises to the nucleus. It is found in the nucleoplasm. The protein resides in the cajal body. Its subcellular location is the nucleus speckle. The protein localises to the cytoplasm. U6 snRNP-binding protein that functions as a recycling factor of the splicing machinery. Promotes the initial reassembly of U4 and U6 snRNPs following their ejection from the spliceosome during its maturation. Also binds U6atac snRNPs and may function as a recycling factor for U4atac/U6atac spliceosomal snRNP, an initial step in the assembly of U12-type spliceosomal complex. The U12-type spliceosomal complex plays a role in the splicing of introns with non-canonical splice sites. May also function as a substrate-targeting factor for deubiquitinases like USP4 and USP15. Recruits USP4 to ubiquitinated PRPF3 within the U4/U5/U6 tri-snRNP complex, promoting PRPF3 deubiquitination and thereby regulating the spliceosome U4/U5/U6 tri-snRNP spliceosomal complex disassembly. May also recruit the deubiquitinase USP15 to histone H2B and mediate histone deubiquitination, thereby regulating gene expression and/or DNA repair. May play a role in hematopoiesis probably through transcription regulation of specific genes including MYC. Functionally, regulates Tat transactivation activity through direct interaction. May be a cellular factor for HIV-1 gene expression and viral replication. This Homo sapiens (Human) protein is Spliceosome associated factor 3, U4/U6 recycling protein.